A 782-amino-acid polypeptide reads, in one-letter code: Hypersensitive to pore-forming toxin protein 40 (782 aa).

Residues glutamate 138–isoleucine 203 enclose the Tudor; degenerate domain. 2 stretches are compositionally biased toward polar residues: residues serine 332–methionine 346 and phenylalanine 413–glutamine 443. 4 disordered regions span residues serine 332–tyrosine 351, phenylalanine 413–aspartate 448, isoleucine 472–glutamate 492, and valine 617–proline 672. Positions valine 617–serine 634 are enriched in polar residues. Over residues aspartate 638–aspartate 662 the composition is skewed to basic and acidic residues.

It is found in the cytoplasm. It localises to the perinuclear region. The sequence is that of Hypersensitive to pore-forming toxin protein 40 from Caenorhabditis elegans.